The following is a 184-amino-acid chain: UPF0179 protein Pcal_2106 (184 aa).

The span at 146–161 (GASSAGISQAPSRVPL) shows a compositional bias: low complexity. The tract at residues 146–184 (GASSAGISQAPSRVPLSKPPSKSPSPQKSSPRGPTSRLP) is disordered.

This sequence belongs to the UPF0179 family.

This is UPF0179 protein Pcal_2106 from Pyrobaculum calidifontis (strain DSM 21063 / JCM 11548 / VA1).